An 83-amino-acid polypeptide reads, in one-letter code: Small ribosomal subunit protein eS21 (83 aa).

The protein belongs to the eukaryotic ribosomal protein eS21 family. As to quaternary structure, component of the 40S small ribosomal subunit.

The protein localises to the cytoplasm. The protein resides in the cytosol. Its subcellular location is the rough endoplasmic reticulum. Its function is as follows. Component of the small ribosomal subunit. The ribosome is a large ribonucleoprotein complex responsible for the synthesis of proteins in the cell. The chain is Small ribosomal subunit protein eS21 (rps21) from Ictalurus punctatus (Channel catfish).